Here is a 1143-residue protein sequence, read N- to C-terminus: DNA polymerase II large subunit (1143 aa).

The protein belongs to the archaeal DNA polymerase II family. In terms of assembly, heterodimer of a large subunit and a small subunit.

It carries out the reaction DNA(n) + a 2'-deoxyribonucleoside 5'-triphosphate = DNA(n+1) + diphosphate. It catalyses the reaction Exonucleolytic cleavage in the 3'- to 5'-direction to yield nucleoside 5'-phosphates.. Functionally, possesses two activities: a DNA synthesis (polymerase) and an exonucleolytic activity that degrades single-stranded DNA in the 3'- to 5'-direction. Has a template-primer preference which is characteristic of a replicative DNA polymerase. The chain is DNA polymerase II large subunit (polC) from Archaeoglobus fulgidus (strain ATCC 49558 / DSM 4304 / JCM 9628 / NBRC 100126 / VC-16).